A 534-amino-acid polypeptide reads, in one-letter code: Calcium-dependent protein kinase 18 (534 aa).

A disordered region spans residues 1-49 (MGLCFSSPKATRRGTGSRNPNPDSPTQGKASEKVSNKNKKNTKKIQLRH). Glycine 2 carries the N-myristoyl glycine lipid modification. Polar residues predominate over residues 14 to 29 (GTGSRNPNPDSPTQGK). Residues 36–47 (NKNKKNTKKIQL) show a composition bias toward basic residues. The Protein kinase domain occupies 71 to 331 (YTIGKLLGHG…AAQALSHSWV (261 aa)). ATP-binding positions include 77–85 (LGHGQFGFT) and lysine 100. Aspartate 197 serves as the catalytic Proton acceptor. Serine 237 is modified (phosphoserine). The segment at 337 to 367 (ASEVPIDISVLNNMRQFVKFSRLKQIALRAL) is autoinhibitory domain. EF-hand domains follow at residues 374–409 (DELD…DVPW), 411–446 (LKDA…VNQL), 453–488 (KWQQ…KGSI), and 491–518 (LLEE…ASLK). The Ca(2+) site is built by aspartate 387, aspartate 389, asparagine 391, serine 393, glutamate 398, aspartate 424, asparagine 426, aspartate 428, glutamate 435, aspartate 466, aspartate 468, aspartate 470, glutamate 477, aspartate 496, aspartate 498, aspartate 500, and arginine 502. Serine 504 is modified (phosphoserine). A Ca(2+)-binding site is contributed by glutamate 507.

The protein belongs to the protein kinase superfamily. Ser/Thr protein kinase family. CDPK subfamily.

The protein localises to the membrane. It catalyses the reaction L-seryl-[protein] + ATP = O-phospho-L-seryl-[protein] + ADP + H(+). The catalysed reaction is L-threonyl-[protein] + ATP = O-phospho-L-threonyl-[protein] + ADP + H(+). Its activity is regulated as follows. Activated by calcium. Autophosphorylation may play an important role in the regulation of the kinase activity. Its function is as follows. May play a role in signal transduction pathways that involve calcium as a second messenger. The polypeptide is Calcium-dependent protein kinase 18 (CPK18) (Arabidopsis thaliana (Mouse-ear cress)).